The sequence spans 481 residues: Proline--tRNA ligase (481 aa).

It belongs to the class-II aminoacyl-tRNA synthetase family. ProS type 3 subfamily. As to quaternary structure, homodimer.

Its subcellular location is the cytoplasm. It catalyses the reaction tRNA(Pro) + L-proline + ATP = L-prolyl-tRNA(Pro) + AMP + diphosphate. Its function is as follows. Catalyzes the attachment of proline to tRNA(Pro) in a two-step reaction: proline is first activated by ATP to form Pro-AMP and then transferred to the acceptor end of tRNA(Pro). This Chlorobaculum tepidum (strain ATCC 49652 / DSM 12025 / NBRC 103806 / TLS) (Chlorobium tepidum) protein is Proline--tRNA ligase.